Here is a 199-residue protein sequence, read N- to C-terminus: Protein GrpE (199 aa).

The interval 1–50 (MAKKSTRTTPEDSQASTTDSAATSTASEATQAATSATDDQAEQTTAVDPT) is disordered. Low complexity predominate over residues 11–46 (EDSQASTTDSAATSTASEATQAATSATDDQAEQTTA).

It belongs to the GrpE family. Homodimer.

Its subcellular location is the cytoplasm. Functionally, participates actively in the response to hyperosmotic and heat shock by preventing the aggregation of stress-denatured proteins, in association with DnaK and GrpE. It is the nucleotide exchange factor for DnaK and may function as a thermosensor. Unfolded proteins bind initially to DnaJ; upon interaction with the DnaJ-bound protein, DnaK hydrolyzes its bound ATP, resulting in the formation of a stable complex. GrpE releases ADP from DnaK; ATP binding to DnaK triggers the release of the substrate protein, thus completing the reaction cycle. Several rounds of ATP-dependent interactions between DnaJ, DnaK and GrpE are required for fully efficient folding. The polypeptide is Protein GrpE (Lactiplantibacillus plantarum (strain ATCC BAA-793 / NCIMB 8826 / WCFS1) (Lactobacillus plantarum)).